The chain runs to 306 residues: Formimidoylglutamase (306 aa).

Over residues 1 to 13 the composition is skewed to polar residues; the sequence is MFQNATDWTPTST. The disordered stretch occupies residues 1-36; that stretch reads MFQNATDWTPTSTDPRDEQFGGVVEPVPTPSDADDY. 6 residues coordinate Mn(2+): asparagine 123, aspartate 147, histidine 149, aspartate 151, aspartate 234, and aspartate 236.

It belongs to the arginase family. Mn(2+) is required as a cofactor.

It carries out the reaction N-formimidoyl-L-glutamate + H2O = formamide + L-glutamate. The protein operates within amino-acid degradation; L-histidine degradation into L-glutamate; L-glutamate from N-formimidoyl-L-glutamate (hydrolase route): step 1/1. In terms of biological role, catalyzes the conversion of N-formimidoyl-L-glutamate to L-glutamate and formamide. The chain is Formimidoylglutamase from Halobacterium salinarum (strain ATCC 29341 / DSM 671 / R1).